We begin with the raw amino-acid sequence, 248 residues long: Probable transcriptional regulatory protein Bind_0345 (248 aa).

Belongs to the TACO1 family.

It is found in the cytoplasm. In Beijerinckia indica subsp. indica (strain ATCC 9039 / DSM 1715 / NCIMB 8712), this protein is Probable transcriptional regulatory protein Bind_0345.